Consider the following 557-residue polypeptide: Dicarboxylate transporter 1, chloroplastic (557 aa).

The N-terminal 69 residues, 1 to 69, are a transit peptide targeting the chloroplast; it reads MASLALSGSC…STLVKASSTV (69 aa). 12 helical membrane-spanning segments follow: residues 90–110, 122–142, 158–178, 229–249, 256–276, 305–325, 355–375, 376–396, 411–431, 438–458, 477–497, and 531–551; these read AAIK…FVPV, LAIF…LGAV, FAAA…LAFF, AGGI…SNVG, LGSW…SMFL, AAIV…YLIY, IMAA…KLGV, DAVT…VVTW, WFAA…IEWF, FVGG…LLYF, AFLS…LVLA, and YGFL…GAWW.

Belongs to the SLC13A/DASS transporter (TC 2.A.47) family. DIT1 subfamily. In terms of tissue distribution, expressed in roots, rosette and cauline leaves, stems, flowers and siliques.

The protein resides in the plastid. Its subcellular location is the chloroplast inner membrane. Functionally, 2-oxoglutarate/malate translocator involved with DIT2-1 in primary ammonia assimilation and in the re-assimilation of ammonia generated by the photorespiratory pathway. Imports 2-oxoglutarate into plastids as precursor for ammonia assimilation. 2-oxoglutarate is converted to glutamate, the end product of ammonia assimilation, which is exported to the cytosol by DIT2-1. In Arabidopsis thaliana (Mouse-ear cress), this protein is Dicarboxylate transporter 1, chloroplastic (DIT1).